The primary structure comprises 107 residues: Disintegrin lebestatin (107 aa).

A signal peptide spans 1–20; the sequence is MIQVLLVIICLAVFPFQGSS. The propeptide occupies 21–64; that stretch reads KTLKSGNVNDYEVVNPGTVTGLPKGAVEEKHEPMKGNTLQKFPL. Intrachain disulfides connect C65-C74, C70-C93, C71-C98, and C83-C100. The region spanning 65-105 is the Disintegrin domain; it reads CTTGPCCRQCKLKPAGTTCWKTSRTSHYCTGKSCDCPSYPG. A Cell attachment site; atypical (KTS) motif is present at residues 85–87; it reads KTS. Residues 106–107 constitute a propeptide that is removed on maturation; it reads NG.

Monomer. Expressed by the venom gland.

It is found in the secreted. Its function is as follows. Specifically interacts with the alpha-1/beta-1 integrin (ITGA1/ITGB1). Exhibits highly inhibitory effects on cell adhesion and cell migration to collagens I and IV. Also shows in vivo anti-angiogenic activity. This chain is Disintegrin lebestatin, found in Macrovipera lebetinus (Levantine viper).